A 293-amino-acid chain; its full sequence is MKI67 FHA domain-interacting nucleolar phosphoprotein (293 aa).

N-acetylalanine is present on alanine 2. Lysine 38 participates in a covalent cross-link: Glycyl lysine isopeptide (Lys-Gly) (interchain with G-Cter in SUMO2). The RRM domain occupies 45 to 123 (GVVYVRHLPN…RLLECHFMPP (79 aa)). Residue arginine 114 is modified to Omega-N-methylarginine; by PRMT1 and PRMT8. Residue lysine 139 forms a Glycyl lysine isopeptide (Lys-Gly) (interchain with G-Cter in SUMO2) linkage. Phosphoserine is present on serine 145. Residues lysine 179 and lysine 192 each participate in a glycyl lysine isopeptide (Lys-Gly) (interchain with G-Cter in SUMO2) cross-link. Over residues 197-207 (SKTNRQTSTKG) the composition is skewed to polar residues. Residues 197–239 (SKTNRQTSTKGQVLRKKKKKVSGTLDTPEKTVDSQGPTPVCTP) are disordered. The residue at position 218 (serine 218) is a Phosphoserine. Threonine 223 carries the phosphothreonine modification. The interaction with MKI67 stretch occupies residues 226–269 (KTVDSQGPTPVCTPTFLERRKSQVAELNDDDKDDEIVFKQPISC). Phosphoserine is present on serine 230. Phosphothreonine occurs at positions 234 and 238. 2 positions are modified to omega-N-methylated arginine; by PRMT1 and PRMT8: arginine 244 and arginine 245. Position 247 is a phosphoserine (serine 247). Lysine 271 is covalently cross-linked (Glycyl lysine isopeptide (Lys-Gly) (interchain with G-Cter in SUMO1); alternate). Lysine 271 is covalently cross-linked (Glycyl lysine isopeptide (Lys-Gly) (interchain with G-Cter in SUMO2); alternate). Positions 271–293 (KEEIQETQTPTHSRKKRRRSSNQ) are disordered. At threonine 279 the chain carries Phosphothreonine. Residues 282-293 (HSRKKRRRSSNQ) show a composition bias toward basic residues. Arginine 284 bears the Omega-N-methylarginine; by PRMT1 and PRMT8 mark.

Binds to the FHA domain of MKI67; this interaction is enhanced in mitosis. In terms of processing, sequentially phosphorylated on Thr-238, Thr-234 and Ser-230. Thr-234 is phosphorylated only when Thr-238 is phosphorylated. Likewise, phosphorylation at Ser-230 requires that Thr-234 and Thr-238 are phosphorylated. Phosphorylation enhances MKI67 binding.

It is found in the nucleus. It localises to the nucleolus. The protein resides in the chromosome. The chain is MKI67 FHA domain-interacting nucleolar phosphoprotein (NIFK) from Homo sapiens (Human).